A 394-amino-acid chain; its full sequence is General receptor for phosphoinositides 1-associated scaffold protein (394 aa).

Residues 1–51 (MTLRRLRKLQQKEEATAAPDLAGRAPDSEAARAAPTPSGPPAAAAPPGAPG) are disordered. A compositionally biased stretch (pro residues) spans 37–49 (PSGPPAAAAPPGA). Threonine 76 carries the phosphothreonine modification. Residue serine 93 is modified to Phosphoserine. The region spanning 100-189 (VLTLEKGDNQ…VLRLETLYGT (90 aa)) is the PDZ domain. The segment at 180–257 (VLRLETLYGT…GAGLLPGSLP (78 aa)) is interaction with PSCD3. Tyrosine 236 carries the phosphotyrosine modification. At arginine 269 the chain carries Omega-N-methylarginine. The disordered stretch occupies residues 293–318 (EPQALPPPPPPARAPGPGSAETPASV). Residues 296–306 (ALPPPPPPARA) are compositionally biased toward pro residues. A Phosphoserine modification is found at serine 386.

As to quaternary structure, heteromer. Composed of TAMALIN, CYTH2 and at least one GRM1. Also interacts with CYTH3, GRM2, GRM3 and GRM5. Expressed in brain.

The protein localises to the cytoplasm. It localises to the perinuclear region. Its subcellular location is the cell membrane. The protein resides in the postsynaptic cell membrane. Functionally, plays a role in intracellular trafficking and contributes to the macromolecular organization of group 1 metabotropic glutamate receptors (mGluRs) at synapses. In Rattus norvegicus (Rat), this protein is General receptor for phosphoinositides 1-associated scaffold protein.